Here is a 136-residue protein sequence, read N- to C-terminus: Small ribosomal subunit protein uS8c (136 aa).

It belongs to the universal ribosomal protein uS8 family. As to quaternary structure, part of the 30S ribosomal subunit.

Its subcellular location is the plastid. The protein localises to the chloroplast. One of the primary rRNA binding proteins, it binds directly to 16S rRNA central domain where it helps coordinate assembly of the platform of the 30S subunit. The chain is Small ribosomal subunit protein uS8c (rps8) from Citrus sinensis (Sweet orange).